Here is a 381-residue protein sequence, read N- to C-terminus: Chaperone protein DnaJ (381 aa).

A J domain is found at 5 to 70 (DFYEVLGVGR…QKKAAYDQYG (66 aa)). The CR-type zinc finger occupies 136-214 (GCSKEIEVPT…CHGQGRKQKT (79 aa)). The Zn(2+) site is built by Cys149, Cys152, Cys166, Cys169, Cys188, Cys191, Cys202, and Cys205. CXXCXGXG motif repeat units lie at residues 149 to 156 (CDACDGSG), 166 to 173 (CGTCHGHG), 188 to 195 (CPTCHGKG), and 202 to 209 (CNVCHGQG).

This sequence belongs to the DnaJ family. As to quaternary structure, homodimer. Zn(2+) serves as cofactor.

It is found in the cytoplasm. Functionally, participates actively in the response to hyperosmotic and heat shock by preventing the aggregation of stress-denatured proteins and by disaggregating proteins, also in an autonomous, DnaK-independent fashion. Unfolded proteins bind initially to DnaJ; upon interaction with the DnaJ-bound protein, DnaK hydrolyzes its bound ATP, resulting in the formation of a stable complex. GrpE releases ADP from DnaK; ATP binding to DnaK triggers the release of the substrate protein, thus completing the reaction cycle. Several rounds of ATP-dependent interactions between DnaJ, DnaK and GrpE are required for fully efficient folding. Also involved, together with DnaK and GrpE, in the DNA replication of plasmids through activation of initiation proteins. In Vibrio cholerae serotype O1 (strain ATCC 39541 / Classical Ogawa 395 / O395), this protein is Chaperone protein DnaJ.